The following is a 239-amino-acid chain: ATP synthase subunit a (239 aa).

5 helical membrane-spanning segments follow: residues 17 to 37, 75 to 95, 113 to 133, 182 to 202, and 206 to 226; these read GTVCMMVLLTCLIVFFLVYFF, FHLLAFTLFLFVFVANNIGLI, DPFVTLTLAFIMITLTHLFGV, LLTLIANMMNNLGWFSLPLAI, and MVWIAFSLFIGSIQAFVFVTL.

This sequence belongs to the ATPase A chain family. As to quaternary structure, F-type ATPases have 2 components, CF(1) - the catalytic core - and CF(0) - the membrane proton channel. CF(1) has five subunits: alpha(3), beta(3), gamma(1), delta(1), epsilon(1). CF(0) has three main subunits: a(1), b(2) and c(9-12). The alpha and beta chains form an alternating ring which encloses part of the gamma chain. CF(1) is attached to CF(0) by a central stalk formed by the gamma and epsilon chains, while a peripheral stalk is formed by the delta and b chains.

It is found in the cell membrane. Its function is as follows. Key component of the proton channel; it plays a direct role in the translocation of protons across the membrane. The sequence is that of ATP synthase subunit a from Enterococcus hirae (strain ATCC 9790 / DSM 20160 / JCM 8729 / LMG 6399 / NBRC 3181 / NCIMB 6459 / NCDO 1258 / NCTC 12367 / WDCM 00089 / R).